The sequence spans 59 residues: Cecropin-B2 (59 aa).

The first 23 residues, 1 to 23 (MNFNKLFLIVILAALLLLGQTEA), serve as a signal peptide directing secretion. Leucine amide is present on Leu-57.

The protein belongs to the cecropin family.

It is found in the secreted. Cecropins have lytic and antibacterial activity against several Gram-positive and Gram-negative bacteria. In Culex pipiens pipiens (Northern house mosquito), this protein is Cecropin-B2 (CECB2).